We begin with the raw amino-acid sequence, 1454 residues long: MDVDEPNPIVISDSEATDEEISIIYEPEFNENYLWAEENVQEASRSQKIVTERLSLDSTAGESCTPSVVTDTQVTTGLRWSLRKRKAIQKMPYSLERIKHRQLLEGYDISSFDSISNQLTLPKNASTVIHSNDILLTKRTGKPLDEQKDVTIDSIKPENSSVQSQRYDSDEEIPKKRHRTFKDLDQDIVFQSGDSTEDEQDLASTNLQNTQNDEVIFRGRVLNVRTGYRGVLPRVAWEKSLQKQQSSKVTKRKTQLLNHKGVAKRKMNRSAHIEDEEQNLLNDLIAPDDELDIEENAPPDIYLGNLPEDREANEKELKELQEYYESKYSEDAQSAGTSGFNLNEEYRNEPVYELEYDGPGSCISHVSYKDQPIIYLNSRHSDSGFSEQYNISAEDNQSVISLDAAEEHNDGIIDKMLVKPKRIKATNDANFLNTKSKRVRRYKYKYRNSCLAPSTKAIKVGKRSAHKSHLAANNPVSFVSKKNHVIDDYFFEELESQSLEQDDSSSLKPQKKRRKKKAPIYSSFSADLESRRKPVFNTVVEVPTNRYAFTKPNVRNRDSINHDMEFEEEDSNQELGPIMVVLDSILLKKPFEPPNFFKIQLSDKSFLLSKLNPADIATSLQKIFRVIIDKGITDTELVHFNESLIAFLVHLDMPELFDLIGEFHREFRSKVNSLRKKAKPIHFFQIAACQLMFLEISRYNKISAAAKFDMDVKLLDHIVSFFKLLSVCYDSVMKNPMQYLYTSYYILSAVVDVIHKKEALWDLFQKHPFSPHISLLLVNIFPTKVCRWQVLRLDSEFQPLSSAFRFINYCIETCNWNVTNSLILSLDRIFKRRRFSDFEEESDLSQNNKIIYPPTNQLTSRLMFNRYLHLLTLCELSSSDTQRVIPMGDISMNDSLSVLKNRLNLLIVLATRFDLNLEKRFQELTRPLYSKEYLNLHTQNTVRTITTLIMQASLSFLEISRIKNHPFSGKFIASLFDKLVLQQPSISGVTENFLKEFTNLVSKMKRKSVSMLKFLYPSLVAMSQENIFESSFFLLLQVYLKSLDVLGPTWVQNYLFQFIKSKAQENERWIECYCQIGKFLVDSGIFTWWTFFTYNGLDAALHFQLAFHSLIIDFCDTDSFELLKKPLYSIASDLLLISKDDAFYHFLSNLLKRAHIIVADLKPVSDENELLRLAYIFSKALKKNAYQDLLAVFLSLAKKHYDEGDISRNFLAKYLEFLNKNCLTELRNNQLFISLRRELGISSDEDEKCAFWDSFNEAGDILSKAAFVETGIVQACCTGNEIDGYLDNLSTLFTSTMLESPFAFFSDLVIAHIFENRPFFDVNIKNFLLSHFIDLFNKVLKMKFEQVSPDEFAELCKVYRALCIECATDDTFNSNSDLIAAKDAFLVSVLRIADGFWEHDKLLQLRMLDSNMNIPNQIPHTTLQSSLSAIVIKIIESNIGKIEASEPFKTFKNT.

The disordered stretch occupies residues N159–H178. The tract at residues Y1201–T1454 is required for interaction with MMS1.

Belongs to the MMS22 family. As to quaternary structure, component of a cullin-RING ligase (CRL) composed of 4 subunits: the RING protein HRT1, the cullin RTT101, a linker protein MMS1, and the substrate receptor MMS22. This complex further interacts with RTT107 and CTF4 to form RTT101-MMS1-MMS22-RTT107 and RTT101-MMS1-MMS22-CTF4 complexes respectively. Interacts (via C-ter) with MMS1 (via N-ter). Interacts with RTT107.

It localises to the nucleus. Functionally, substrate targeting component of a cullin-RING-based E3 ubiquitin-protein ligase complex RTT101(MMS1-MMS22). RTT101(MMS1-MMS22) promotes fork progression through damaged DNA or natural pause sites by stabilizing replication proteins like the replication fork-pausing complex (FPC) and leading-strand polymerase at stalled replication forks. RTT101(MMS1-MMS22) ubiquitinates the acetylated histones H3K56ac-H4 at lysine residues H3K121, H3K122 and H3K125. Ubiquitination is required for efficient histone deposition during replication-coupled nucleosome assembly, probably by facilitating the transfer of H3-H4 from ASF1 to other chaperones involved in histone deposition. The sequence is that of E3 ubiquitin-protein ligase substrate receptor MMS22 (MMS22) from Saccharomyces cerevisiae (strain ATCC 204508 / S288c) (Baker's yeast).